The following is a 371-amino-acid chain: MESNRDEAERCVRIGKAAIEAGDKEKARRFFSKAERLYPSSEARVLLDALEKNDTAGNGPQSEKMSKSTEQPKAEKDSSGDTGKGHTQDQVDGVQRIKKCKTYYEVLGVSPDAGEEDLKKAYRKLALKFHPDKNHAPGATEAFKKIGNAYAVLSNPEKRKQYDLTGSEDNVQNNHRNGGFDYHRGFEADITPEDLFNMFFGGGFPSGSVHTFSNGRTRYSHHQHHHHSGHDREEERADGGFSMFIQLMPIIVLILVSLLSQLMVSNPPYSLYPRSGQTIKRVTENLQISYYVSKDFKSEYNGMLLQKLEKNIEEDYVANVRNNCWRERQQKQDLLHAAKVYRDERLRMKAESISMENCKELNRLTSLFRGG.

Over 1–238 (MESNRDEAER…GHDREEERAD (238 aa)) the chain is Cytoplasmic. The TPR repeat unit spans residues 8–41 (AERCVRIGKAAIEAGDKEKARRFFSKAERLYPSS). Residues 48–92 (DALEKNDTAGNGPQSEKMSKSTEQPKAEKDSSGDTGKGHTQDQVD) form a disordered region. The span at 64-89 (KMSKSTEQPKAEKDSSGDTGKGHTQD) shows a compositional bias: basic and acidic residues. The 65-residue stretch at 102–166 (TYYEVLGVSP…EKRKQYDLTG (65 aa)) folds into the J domain. The disordered stretch occupies residues 215–235 (GRTRYSHHQHHHHSGHDREEE). Over residues 218–229 (RYSHHQHHHHSG) the composition is skewed to basic residues. Residues 239–259 (GGFSMFIQLMPIIVLILVSLL) traverse the membrane as a helical segment. The Lumenal portion of the chain corresponds to 260 to 371 (SQLMVSNPPY…NRLTSLFRGG (112 aa)).

It belongs to the DnaJ family. DNAJB12/DNAJB14 subfamily.

The protein localises to the endoplasmic reticulum membrane. Its function is as follows. Acts as a co-chaperone with HSPA8/Hsc70; required to promote protein folding and trafficking, prevent aggregation of client proteins, and promote unfolded proteins to endoplasmic reticulum-associated degradation (ERAD) pathway. Acts by determining hspa8/Hsc70's ATPase and polypeptide-binding activities. Can also act independently of hspa8/Hsc70: together with dnajb12, acts as a chaperone that promotes maturation of potassium channels by stabilizing nascent channel subunits and assembling them into tetramers. While stabilization of nascent channel proteins is dependent on hspa8/Hsc70, the process of oligomerization of channel subunits is independent of hspa8/Hsc70. The protein is DnaJ homolog subfamily B member 14 (dnajb14) of Xenopus laevis (African clawed frog).